We begin with the raw amino-acid sequence, 359 residues long: 3-dehydroquinate synthase (359 aa).

Residues G105 to D109, T129 to T130, K142, K151, and T169 to T172 each bind NAD(+). Residues E184, H247, and H263 each coordinate Zn(2+).

Belongs to the sugar phosphate cyclases superfamily. Dehydroquinate synthase family. The cofactor is Co(2+). It depends on Zn(2+) as a cofactor. NAD(+) is required as a cofactor.

Its subcellular location is the cytoplasm. It catalyses the reaction 7-phospho-2-dehydro-3-deoxy-D-arabino-heptonate = 3-dehydroquinate + phosphate. Its pathway is metabolic intermediate biosynthesis; chorismate biosynthesis; chorismate from D-erythrose 4-phosphate and phosphoenolpyruvate: step 2/7. Catalyzes the conversion of 3-deoxy-D-arabino-heptulosonate 7-phosphate (DAHP) to dehydroquinate (DHQ). This is 3-dehydroquinate synthase from Ruminiclostridium cellulolyticum (strain ATCC 35319 / DSM 5812 / JCM 6584 / H10) (Clostridium cellulolyticum).